The chain runs to 1111 residues: Putative leucine--tRNA ligase, cytoplasmic (1111 aa).

The 'HIGH' region motif lies at 74 to 84; that stretch reads PYMNGALHLGH. Ser-460 is subject to Phosphoserine. Residues 737–741 carry the 'KMSKS' region motif; that stretch reads KMSKS. Lys-740 is an ATP binding site.

This sequence belongs to the class-I aminoacyl-tRNA synthetase family.

It is found in the cytoplasm. The enzyme catalyses tRNA(Leu) + L-leucine + ATP = L-leucyl-tRNA(Leu) + AMP + diphosphate. The sequence is that of Putative leucine--tRNA ligase, cytoplasmic (lrs1) from Schizosaccharomyces pombe (strain 972 / ATCC 24843) (Fission yeast).